Reading from the N-terminus, the 1383-residue chain is DNA-directed RNA polymerase subunit beta (1383 aa).

Belongs to the RNA polymerase beta chain family. The RNAP catalytic core consists of 2 alpha, 1 beta, 1 beta' and 1 omega subunit. When a sigma factor is associated with the core the holoenzyme is formed, which can initiate transcription.

It carries out the reaction RNA(n) + a ribonucleoside 5'-triphosphate = RNA(n+1) + diphosphate. In terms of biological role, DNA-dependent RNA polymerase catalyzes the transcription of DNA into RNA using the four ribonucleoside triphosphates as substrates. The polypeptide is DNA-directed RNA polymerase subunit beta (Xanthomonas oryzae pv. oryzae (strain MAFF 311018)).